The chain runs to 2194 residues: MGAQVSTQKTGAHETGLSASGNSVIHYTNINYYKDSASNSLNRQDFTQDPSRFTEPVQDVLIKTLPALNSPTVEECGYSDRVRSITLGNSTITTQECANVVVGYGVWPTYLSDHEATAVDQPTQPDVATCRFYTLESVKWESSSAGWWWKFPEALSDMGLFGQNMQYHYLGRAGYTIHVQCNASKFHQGCLLVVCVPEAEMGAATTDHAMNHTKLSNIGQAMEFSAGKSTDQTGPQTAVHNAGMGVAVGNLTIYPHQWINLRTNNSATIVMPYINSVPMDNMYRHYNFTLMVIPFAKLEHSPQASTYVPITVTVAPMCAEYNGLRLAGHQGLPTMNTPGSTQFLTSDDFQSPSAMPQFDVTPEIQIPGQVRNLMEIAEVDSVVPVDNTEEHVNSIEAYRIPVRPQTNSGEQVFGFQLQPGYDSVLKHTLLGEILNYYANWSGSMKLTFMYCGAAMATGKFLIAYSPPGAGVPGSRKDAMLGTHVIWDVGLQSSCVLCVPWISQTNYRYVTRDAYTDAGYITCWYQTSIVTPPDIPTTSTILCFVSACNDFSVRLLRDTPFITQQALYQNDPEGALNKAVGRVADTIASGPVNTEQIPALTAVETGHTSQVVPSDTMQTRHVVNFHTRSESSLENFMGRAACAYIAHYTTEKANDDLDRYTNWEITTRQVAQLRRKLEMFTYMRFDLEITFVITSSQRTSNRYASDSPPLTHQIMYVPPGGPIPKGYEDFAWQTSTNPSVFWTEGNAPPRMSIPFMSVGNAYCNFYDGWSHFSQSGVYGYTTLNNMGHLYFRHVNKSTAYPVNSVARVYFKPKHVKAWVPRAPRLCPYLYAKNVNFDVQGVTESRGKITLDRSTHNPVLTTGAFEQQSGAAYVGNYRLVNRHLATHTDWQNCVWKDYNRDLLVSTTTAHGCDTIARCQCTTGVYFCASRNKHYPVTFEGPGLVEVQESEYYPKRYQSHVLLAAGFSEPGDCGGILRCEHGVIGLVTMGGEGVVGFADVRDLLWLEDDAMEQGVKDYVEQLGNAFGSGFTNQICEQVNLLKESLIGQDSILEKSLKALVKIISALVIVVRNHDDLITVTATLALIGCTTSPWRWLKHKVSQYYGIPMAERQNNNWLKKFTEMTNACKGMEWIAIKIQKFIEWLKVKILPEVKEKHEFLNRLKQLPLLESQIATIEQSAPSQSDQEQLFSNVQYFAHYCRKYAPLYAAEAKRVFSLEKKMSNYIQFKSKCRIEPVCLLLHGSPGAGKSVATNLIGRSLAEKLNSSVYSLPPDPDHFDGYKQQAVVIMDDLCQNPDGKDVSLFCQMVSSVDFVPPMAALEEKGILFTSPFVLASTNAGSINAPTVSDSRALARRFHFDMNIEVISMYSQNGKINMPMSVKTCDEECCPVNFKRCCPLVCGKAIQFIDRRTQVRYSLDMLVTEMFREYNHRHSVGATLEALFQGPPVYREIKISVAPETPPPPAIADLLKSVDSEAVREYCKEKGWLVPEINSTLQIEKHVSRAFICLQALTTFVSVAGIIYIIYKLFAGFQGAYSGMPNQKSKVPTLRQAKVQGPAFEFAVAMMKRNASTVKTEYGEFTMLGIYDRWAVLPRHAKPGPTIIMNDQEVGVVDAKELVDKDGTNLELTLLKLNRNEKFRDIRGFLAREEAEVNEAVLAINTSKFPNMYIPVGQVTDYGFLNLGGTPTKRMLMYNFPTRAGQCGGVLMSTGKVLGVHVGGNGHQGFSAALLRHYFNDEQGEIEFIESSKEAGFPVINTPSKTKLEPSVFHHVFEGNKEPAVLRNGDPRLKANFEEAIFSKYIGNVNTHVDEYMMEAVDHYAGQLATLDISTEPMKLEDAVYGTEGLEALDLTTSAGYPYVALGIKKRDILSKKTKDLAKLKECMDKYGLNLPMVTYVKDELRSAEKVAKGKSRLIEASSLNDSVAMRQTFGNLYKTFHMNPGIVTGSAVGCDPDLFWSKIPVMLDGHLIAFDYSGYDASLSPVWFACLKLLLEKLGYSHKETNYIDYLCNSHHLYRDKHYFVRGGMPSGCSGTSIFNSMINNIIIRTLMLKVYKGIDLDQFRMIAYGDDVIASYPHPIDASLLAEAGKGYGLIMTPADKGECFNEVTWTNVTFLKRYFRADEQYPFLVHPVMPMKDIHESIRWTKDPKNTQDHVRSLCLLAWHNGEQEYEEFVSKIRSVPVGRCLTLPAFSTLRRKWLDSF.

Gly2 is lipidated: N-myristoyl glycine; by host. Topologically, residues 2 to 1504 (GAQVSTQKTG…HVSRAFICLQ (1503 aa)) are cytoplasmic. The amphipathic alpha-helix stretch occupies residues 566–582 (LYQNDPEGALNKAVGRV). Residues His881 and Asp899 each act as for protease 2A activity in the active site. Zn(2+) is bound by residues Cys916 and Cys918. Catalysis depends on Cys970, which acts as the For protease 2A activity. Residues Cys976 and His978 each coordinate Zn(2+). The interval 1110–1182 (NNNWLKKFTE…EQSAPSQSDQ (73 aa)) is membrane-binding. The segment at 1110–1248 (NNNWLKKFTE…SPGAGKSVAT (139 aa)) is oligomerization. Residues 1131 to 1135 (AIKIQ) form an RNA-binding region. In terms of domain architecture, SF3 helicase spans 1214 to 1370 (EKKMSNYIQF…SMYSQNGKIN (157 aa)). Positions 1378, 1390, and 1395 each coordinate Zn(2+). The C4-type; degenerate zinc-finger motif lies at 1378 to 1395 (CDEECCPVNFKRCCPLVC). Residues 1422–1429 (EYNHRHSV) form an RNA-binding region. The tract at residues 1433–1438 (LEALFQ) is oligomerization. The stretch at 1505-1520 (ALTTFVSVAGIIYIIY) is an intramembrane region. The Cytoplasmic segment spans residues 1521–2194 (KLFAGFQGAY…TLRRKWLDSF (674 aa)). Residue Tyr1530 is modified to O-(5'-phospho-RNA)-tyrosine. The 179-residue stretch at 1550 to 1728 (GPAFEFAVAM…FSAALLRHYF (179 aa)) folds into the Peptidase C3 domain. Active-site for protease 3C activity residues include His1589, Glu1620, and Cys1696. Residues 1959–2075 (GHLIAFDYSG…SYPHPIDASL (117 aa)) enclose the RdRp catalytic domain. 2 residues coordinate Mg(2+): Asp1965 and Asp2061.

Belongs to the picornaviruses polyprotein family. In terms of assembly, interacts with capsid protein VP1 and capsid protein VP3 to form heterotrimeric protomers. As to quaternary structure, interacts with capsid protein VP0, and capsid protein VP3 to form heterotrimeric protomers. Five protomers subsequently associate to form pentamers which serve as building blocks for the capsid. Interacts with capsid protein VP2, capsid protein VP3 and capsid protein VP4 following cleavage of capsid protein VP0. Interacts with capsid protein VP1 and capsid protein VP3 in the mature capsid. In terms of assembly, interacts with capsid protein VP0 and capsid protein VP1 to form heterotrimeric protomers. Five protomers subsequently associate to form pentamers which serve as building blocks for the capsid. Interacts with capsid protein VP4 in the mature capsid. Interacts with protein 2C; this interaction may be important for virion morphogenesis. As to quaternary structure, interacts with capsid protein VP1 and capsid protein VP3. Homodimer. In terms of assembly, homohexamer; forms a hexameric ring structure with 6-fold symmetry characteristic of AAA+ ATPases. Interacts (via N-terminus) with host RTN3 (via reticulon domain); this interaction is important for viral replication. Interacts with capsid protein VP3; this interaction may be important for virion morphogenesis. As to quaternary structure, interacts with protein 3CD. Homodimer. Interacts with host GBF1. Interacts (via GOLD domain) with host ACBD3 (via GOLD domain); this interaction allows the formation of a viral protein 3A/ACBD3 heterotetramer with a 2:2 stoichiometry, which will stimulate the recruitment of host PI4KB in order to synthesize PI4P at the viral RNA replication sites. In terms of assembly, interacts with RNA-directed RNA polymerase. As to quaternary structure, interacts with protein 3AB and with RNA-directed RNA polymerase. Interacts with Viral protein genome-linked and with protein 3CD. Mg(2+) serves as cofactor. In terms of processing, specific enzymatic cleavages in vivo by the viral proteases yield processing intermediates and the mature proteins. Myristoylation is required for the formation of pentamers during virus assembly. Further assembly of 12 pentamers and a molecule of genomic RNA generates the provirion. Post-translationally, during virion maturation, immature virions are rendered infectious following cleavage of VP0 into VP4 and VP2. This maturation seems to be an autocatalytic event triggered by the presence of RNA in the capsid and it is followed by a conformational change infectious virion. In terms of processing, myristoylation is required during RNA encapsidation and formation of the mature virus particle. VPg is uridylylated by the polymerase into VPg-pUpU. This acts as a nucleotide-peptide primer for the genomic RNA replication.

It localises to the virion. Its subcellular location is the host cytoplasm. It is found in the host cytoplasmic vesicle membrane. The protein localises to the host nucleus. The catalysed reaction is a ribonucleoside 5'-triphosphate + H2O = a ribonucleoside 5'-diphosphate + phosphate + H(+). It carries out the reaction Selective cleavage of Tyr-|-Gly bond in the picornavirus polyprotein.. It catalyses the reaction RNA(n) + a ribonucleoside 5'-triphosphate = RNA(n+1) + diphosphate. The enzyme catalyses Selective cleavage of Gln-|-Gly bond in the poliovirus polyprotein. In other picornavirus reactions Glu may be substituted for Gln, and Ser or Thr for Gly.. Its activity is regulated as follows. Replication or transcription is subject to high level of random mutations by the nucleotide analog ribavirin. Functionally, forms an icosahedral capsid of pseudo T=3 symmetry with capsid proteins VP2 and VP3. The capsid is 300 Angstroms in diameter, composed of 60 copies of each capsid protein and enclosing the viral positive strand RNA genome. Capsid protein VP1 mainly forms the vertices of the capsid. Capsid protein VP1 interacts with host cell receptor to provide virion attachment to target host cells. This attachment induces virion internalization. Tyrosine kinases are probably involved in the entry process. After binding to its receptor, the capsid undergoes conformational changes. Capsid protein VP1 N-terminus (that contains an amphipathic alpha-helix) and capsid protein VP4 are externalized. Together, they shape a pore in the host membrane through which viral genome is translocated to host cell cytoplasm. Its function is as follows. Forms an icosahedral capsid of pseudo T=3 symmetry with capsid proteins VP2 and VP3. The capsid is 300 Angstroms in diameter, composed of 60 copies of each capsid protein and enclosing the viral positive strand RNA genome. In terms of biological role, lies on the inner surface of the capsid shell. After binding to the host receptor, the capsid undergoes conformational changes. Capsid protein VP4 is released, Capsid protein VP1 N-terminus is externalized, and together, they shape a pore in the host membrane through which the viral genome is translocated into the host cell cytoplasm. Component of immature procapsids, which is cleaved into capsid proteins VP4 and VP2 after maturation. Allows the capsid to remain inactive before the maturation step. Functionally, cysteine protease that cleaves viral polyprotein and specific host proteins. It is responsible for the autocatalytic cleavage between the P1 and P2 regions, which is the first cleavage occurring in the polyprotein. Also cleaves the host translation initiation factor EIF4G1, in order to shut down the capped cellular mRNA translation. Inhibits the host nucleus-cytoplasm protein and RNA trafficking by cleaving host members of the nuclear pores. Counteracts stress granule formation probably by antagonizing its assembly or promoting its dissassembly. Its function is as follows. Plays an essential role in the virus replication cycle by acting as a viroporin. Creates a pore in the host endoplasmic reticulum and as a consequence releases Ca2+ in the cytoplasm of infected cell. In turn, high levels of cytoplasmic calcium may trigger membrane trafficking and transport of viral ER-associated proteins to viroplasms, sites of viral genome replication. In terms of biological role, induces and associates with structural rearrangements of intracellular membranes. Displays RNA-binding, nucleotide binding and NTPase activities. May play a role in virion morphogenesis and viral RNA encapsidation by interacting with the capsid protein VP3. Localizes the viral replication complex to the surface of membranous vesicles. Together with protein 3CD binds the Cis-Active RNA Element (CRE) which is involved in RNA synthesis initiation. Acts as a cofactor to stimulate the activity of 3D polymerase, maybe through a nucleid acid chaperone activity. Functionally, localizes the viral replication complex to the surface of membranous vesicles. It inhibits host cell endoplasmic reticulum-to-Golgi apparatus transport and causes the disassembly of the Golgi complex, possibly through GBF1 interaction. This would result in depletion of MHC, trail receptors and IFN receptors at the host cell surface. Plays an essential role in viral RNA replication by recruiting ACBD3 and PI4KB at the viral replication sites, thereby allowing the formation of the rearranged membranous structures where viral replication takes place. Its function is as follows. Acts as a primer for viral RNA replication and remains covalently bound to viral genomic RNA. VPg is uridylylated prior to priming replication into VPg-pUpU. The oriI viral genomic sequence may act as a template for this. The VPg-pUpU is then used as primer on the genomic RNA poly(A) by the RNA-dependent RNA polymerase to replicate the viral genome. During genome replication, the VPg-RNA linkage is removed by the host TDP2, thereby accelerating replication. During the late stage of the replication cycle, host TDP2 is excluded from sites of viral RNA synthesis and encapsidation, allowing for the generation of progeny virions. In terms of biological role, involved in the viral replication complex and viral polypeptide maturation. It exhibits protease activity with a specificity and catalytic efficiency that is different from protease 3C. Protein 3CD lacks polymerase activity. Protein 3CD binds to the 5'UTR of the viral genome. Replicates the viral genomic RNA on the surface of intracellular membranes. May form linear arrays of subunits that propagate along a strong head-to-tail interaction called interface-I. Covalently attaches UMP to a tyrosine of VPg, which is used to prime RNA synthesis. The positive stranded RNA genome is first replicated at virus induced membranous vesicles, creating a dsRNA genomic replication form. This dsRNA is then used as template to synthesize positive stranded RNA genomes. ss(+)RNA genomes are either translated, replicated or encapsidated. Functionally, major viral protease that mediates proteolytic processing of the polyprotein. Cleaves host EIF5B, contributing to host translation shutoff. Also cleaves host PABPC1, contributing to host translation shutoff. Cleaves host NLRP1, triggers host N-glycine-mediated degradation of the autoinhibitory NLRP1 N-terminal fragment. This is Genome polyprotein from Homo sapiens (Human).